The primary structure comprises 352 residues: Histidinol-phosphate aminotransferase (352 aa).

Position 221 is an N6-(pyridoxal phosphate)lysine (Lys-221).

It belongs to the class-II pyridoxal-phosphate-dependent aminotransferase family. Histidinol-phosphate aminotransferase subfamily. In terms of assembly, homodimer. The cofactor is pyridoxal 5'-phosphate.

The enzyme catalyses L-histidinol phosphate + 2-oxoglutarate = 3-(imidazol-4-yl)-2-oxopropyl phosphate + L-glutamate. Its pathway is amino-acid biosynthesis; L-histidine biosynthesis; L-histidine from 5-phospho-alpha-D-ribose 1-diphosphate: step 7/9. This chain is Histidinol-phosphate aminotransferase, found in Staphylococcus aureus (strain MRSA252).